Reading from the N-terminus, the 157-residue chain is Ribonuclease H (157 aa).

The RNase H type-1 domain occupies 1–146; sequence MPDLVAYTDG…ADELARAGMA (146 aa). 4 residues coordinate Mg(2+): Asp-9, Glu-52, Asp-74, and Asp-138.

Belongs to the RNase H family. As to quaternary structure, monomer. Mg(2+) is required as a cofactor.

It is found in the cytoplasm. The enzyme catalyses Endonucleolytic cleavage to 5'-phosphomonoester.. In terms of biological role, endonuclease that specifically degrades the RNA of RNA-DNA hybrids. The chain is Ribonuclease H from Jannaschia sp. (strain CCS1).